A 387-amino-acid chain; its full sequence is Pepsin A-5 (387 aa).

A signal peptide spans 1 to 15; that stretch reads MKWLWVLGLVALSEC. Residues 16–62 constitute a propeptide, activation peptide; it reads LVKIPLMKIKSMRENLRESQVLKDYLEKYPRSRAHVLLEQRRNPAVT. One can recognise a Peptidase A1 domain in the interval 74 to 384; it reads YIGIISIGTP…DRANNRIGLA (311 aa). Residue aspartate 92 is part of the active site. 2 cysteine pairs are disulfide-bonded: cysteine 105-cysteine 110 and cysteine 266-cysteine 270. Residue aspartate 275 is part of the active site. Cysteine 309 and cysteine 343 are disulfide-bonded.

This sequence belongs to the peptidase A1 family. In terms of tissue distribution, expressed in glandular chief cells of the neonatal stomach. Expressed in yolk sacs of the placenta (at protein level).

It is found in the secreted. It catalyses the reaction Preferential cleavage: hydrophobic, preferably aromatic, residues in P1 and P1' positions. Cleaves 1-Phe-|-Val-2, 4-Gln-|-His-5, 13-Glu-|-Ala-14, 14-Ala-|-Leu-15, 15-Leu-|-Tyr-16, 16-Tyr-|-Leu-17, 23-Gly-|-Phe-24, 24-Phe-|-Phe-25 and 25-Phe-|-Tyr-26 bonds in the B chain of insulin.. With respect to regulation, inhibited by pepstatin A. Shows particularly broad specificity; although bonds involving phenylalanine and leucine are preferred, many others are also cleaved to some extent. May play a role as a specialized neonatal digestive enzyme. In Mus musculus (Mouse), this protein is Pepsin A-5.